A 303-amino-acid polypeptide reads, in one-letter code: Ribosomal protein L11 methyltransferase (303 aa).

The S-adenosyl-L-methionine site is built by Thr144, Gly165, Asp187, and Asn235.

It belongs to the methyltransferase superfamily. PrmA family.

Its subcellular location is the cytoplasm. It carries out the reaction L-lysyl-[protein] + 3 S-adenosyl-L-methionine = N(6),N(6),N(6)-trimethyl-L-lysyl-[protein] + 3 S-adenosyl-L-homocysteine + 3 H(+). Methylates ribosomal protein L11. The protein is Ribosomal protein L11 methyltransferase of Prochlorococcus marinus (strain MIT 9312).